We begin with the raw amino-acid sequence, 376 residues long: Glutamate 5-kinase (376 aa).

Lys-17 is an ATP binding site. The substrate site is built by Ser-56, Asp-144, and Asn-156. Residues 176 to 177 (TD) and 218 to 224 (TGGMQSK) contribute to the ATP site. The PUA domain occupies 283 to 359 (KGTLLLDAGA…QSREIASVLK (77 aa)).

This sequence belongs to the glutamate 5-kinase family.

The protein resides in the cytoplasm. It carries out the reaction L-glutamate + ATP = L-glutamyl 5-phosphate + ADP. Its pathway is amino-acid biosynthesis; L-proline biosynthesis; L-glutamate 5-semialdehyde from L-glutamate: step 1/2. Catalyzes the transfer of a phosphate group to glutamate to form L-glutamate 5-phosphate. In Desulfotalea psychrophila (strain LSv54 / DSM 12343), this protein is Glutamate 5-kinase.